We begin with the raw amino-acid sequence, 119 residues long: Ribonuclease P protein component (119 aa).

Belongs to the RnpA family. Consists of a catalytic RNA component (M1 or rnpB) and a protein subunit.

It carries out the reaction Endonucleolytic cleavage of RNA, removing 5'-extranucleotides from tRNA precursor.. Functionally, RNaseP catalyzes the removal of the 5'-leader sequence from pre-tRNA to produce the mature 5'-terminus. It can also cleave other RNA substrates such as 4.5S RNA. The protein component plays an auxiliary but essential role in vivo by binding to the 5'-leader sequence and broadening the substrate specificity of the ribozyme. This is Ribonuclease P protein component from Yersinia enterocolitica serotype O:8 / biotype 1B (strain NCTC 13174 / 8081).